The chain runs to 388 residues: Chalcone synthase LF3 (388 aa).

The active site involves Cys-164.

It belongs to the thiolase-like superfamily. Chalcone/stilbene synthases family.

The enzyme catalyses (E)-4-coumaroyl-CoA + 3 malonyl-CoA + 3 H(+) = 2',4,4',6'-tetrahydroxychalcone + 3 CO2 + 4 CoA. It participates in secondary metabolite biosynthesis; flavonoid biosynthesis. Its function is as follows. The primary product of this enzyme is 4,2',4',6'-tetrahydroxychalcone (also termed naringenin-chalcone or chalcone) which can under specific conditions spontaneously isomerize into naringenin. This is Chalcone synthase LF3 (CHS-LF3) from Ipomoea batatas (Sweet potato).